Reading from the N-terminus, the 122-residue chain is Large ribosomal subunit protein uL18 (122 aa).

This sequence belongs to the universal ribosomal protein uL18 family. As to quaternary structure, part of the 50S ribosomal subunit; part of the 5S rRNA/L5/L18/L25 subcomplex. Contacts the 5S and 23S rRNAs.

Its function is as follows. This is one of the proteins that bind and probably mediate the attachment of the 5S RNA into the large ribosomal subunit, where it forms part of the central protuberance. The sequence is that of Large ribosomal subunit protein uL18 from Desulforamulus reducens (strain ATCC BAA-1160 / DSM 100696 / MI-1) (Desulfotomaculum reducens).